Consider the following 353-residue polypeptide: Rhodopsin (353 aa).

The Extracellular portion of the chain corresponds to 1 to 36 (MNGTEGPYFYVPMVNTSGIVRSPYEYPQYYLVNPAA). N-linked (GlcNAc...) asparagine glycans are attached at residues Asn2 and Asn15. A helical membrane pass occupies residues 37-61 (YARLGAYMFLLILVGFPINFLTLYV). Over 62 to 73 (TIEHKKLRTPLN) the chain is Cytoplasmic. A helical transmembrane segment spans residues 74–96 (YILLNLAVADLFMVFGGFTTTMY). Residues 97–110 (TSMHGYFVLGRLGC) are Extracellular-facing. Cys110 and Cys187 are disulfide-bonded. A helical transmembrane segment spans residues 111–133 (NIEGFFATLGGEIALWSLVVLAI). The 'Ionic lock' involved in activated form stabilization signature appears at 134-136 (ERW). At 134-152 (ERWVVVCKPISNFRFGENH) the chain is on the cytoplasmic side. A helical membrane pass occupies residues 153–173 (AIMGLAFTWLMALACAAPPLV). Residues 174-202 (GWSRYIPEGMQCSCGIDYYTRAEGFNNES) are Extracellular-facing. N-linked (GlcNAc...) asparagine glycosylation occurs at Asn200. A helical transmembrane segment spans residues 203–224 (FVIYMFVCHFTVPLMVVFFCYG). Topologically, residues 225 to 252 (RLLCAVKEAAAAQQESETTQRAEREVTR) are cytoplasmic. The chain crosses the membrane as a helical span at residues 253–274 (MVIMMVVAFLVCWLPYASVAWW). The Extracellular segment spans residues 275 to 286 (IFTHQGSEFGPV). A helical membrane pass occupies residues 287-308 (FMTIPAFFAKSSSIYNPMIYIC). Lys296 is modified (N6-(retinylidene)lysine). Residues 309–353 (LNKQFRHCMITTLCCGKNPFEEEEGASTASKTEASSVSSSSVSPA) lie on the Cytoplasmic side of the membrane. 2 S-palmitoyl cysteine lipidation sites follow: Cys322 and Cys323. Residues 331 to 353 (EEGASTASKTEASSVSSSSVSPA) are disordered. Positions 334-353 (ASTASKTEASSVSSSSVSPA) are enriched in low complexity.

This sequence belongs to the G-protein coupled receptor 1 family. Opsin subfamily. Post-translationally, phosphorylated on some or all of the serine and threonine residues present in the C-terminal region. Contains one covalently linked retinal chromophore.

The protein resides in the membrane. Its subcellular location is the cell projection. It is found in the cilium. The protein localises to the photoreceptor outer segment. In terms of biological role, photoreceptor required for image-forming vision at low light intensity. While most salt water fish species use retinal as chromophore, most freshwater fish use 3-dehydroretinal, or a mixture of retinal and 3-dehydroretinal. Light-induced isomerization of 11-cis to all-trans retinal triggers a conformational change that activates signaling via G-proteins. Subsequent receptor phosphorylation mediates displacement of the bound G-protein alpha subunit by arrestin and terminates signaling. In Sarpa salpa (Salema), this protein is Rhodopsin (rho).